We begin with the raw amino-acid sequence, 538 residues long: Nectin-2 (538 aa).

A signal peptide spans 1–31 (MARAAALLPSRSPPTPLLWPLLLLLLLETGA). The Ig-like V-type domain maps to 32 to 156 (QDVRVQVLPE…KGSVRGMTWL (125 aa)). Over 32-360 (QDVRVQVLPE…NTAGAGATGG (329 aa)) the chain is Extracellular. 3 cysteine pairs are disulfide-bonded: cysteine 54-cysteine 140, cysteine 183-cysteine 238, and cysteine 283-cysteine 329. The N-linked (GlcNAc...) asparagine glycan is linked to asparagine 137. 2 Ig-like C2-type domains span residues 162-256 (PKNQ…VTLS) and 261-345 (PEVS…QVIF). The N-linked (GlcNAc...) asparagine glycan is linked to asparagine 324. The helical transmembrane segment at 361–381 (IIGGIIAAIIATAVAATGILI) threads the bilayer. Topologically, residues 382–538 (CRQQRKEQTL…GFVMSRAMYV (157 aa)) are cytoplasmic. A disordered region spans residues 390 to 414 (TLQGAEEDEDLEGPPSYKPPTPKAK). Threonine 410 is subject to Phosphothreonine. 3 positions are modified to phosphoserine: serine 433, glycine 465, and glycine 470. The segment at 462–489 (ERSGPLHPGATSLGSPIPVPPGPPAVED) is disordered.

The protein belongs to the nectin family. In terms of assembly, can form trans-heterodimers with NECTIN3. Interacts with CD226 or with PVRIG; these interactions are competitive and have a differential functional outcome on T-cell activation, either positive or negative, respectively. Binds with low affinity to TIGIT. As to quaternary structure, (Microbial infection) Interacts with herpes simplex virus 1 (HHV-1) mutant Rid1, herpes simplex virus 1 (HHV-2) and pseudorabies virus (PRV) envelope glycoprotein D. Ubiquitous.

It localises to the cell membrane. Its function is as follows. Modulator of T-cell signaling. Can be either a costimulator of T-cell function, or a coinhibitor, depending on the receptor it binds to. Upon binding to CD226, stimulates T-cell proliferation and cytokine production, including that of IL2, IL5, IL10, IL13, and IFNG. Upon interaction with PVRIG, inhibits T-cell proliferation. These interactions are competitive. Probable cell adhesion protein. (Microbial infection) Acts as a receptor for herpes simplex virus 1 (HHV-1) mutant Rid1, herpes simplex virus 1 (HHV-2) and pseudorabies virus (PRV). The polypeptide is Nectin-2 (Homo sapiens (Human)).